Reading from the N-terminus, the 178-residue chain is M-phase-specific PLK1-interacting protein (178 aa).

The segment covering 1–15 (MHRPNFRPPTPPYPS) has biased composition (pro residues). The tract at residues 1–134 (MHRPNFRPPT…RGREKRMSNE (134 aa)) is disordered. The span at 17–34 (GIGGWGGGNNFRGALGGG) shows a compositional bias: gly residues. Position 36 is an asymmetric dimethylarginine (R36). Phosphoserine occurs at positions 39 and 46. Position 50 is a phosphothreonine (T50). At R56 the chain carries Omega-N-methylarginine. 3 positions are modified to asymmetric dimethylarginine: R58, R67, and R76. The segment covering 78–96 (GSPSPGGYPGSYSRSPAGS) has biased composition (low complexity). Phosphoserine is present on residues S79, S81, S92, S103, and S114. The segment covering 97 to 121 (QHQFGYSPGQQQTYPQGSPRTSTPF) has biased composition (polar residues). The residue at position 116 (R116) is an Omega-N-methylarginine. A Phosphothreonine modification is found at T119. Residues S123 and S132 each carry the phosphoserine modification.

In terms of assembly, interacts with PLK1; phosphorylation-dependent. In terms of processing, phosphorylated during mitosis in the cell cycle probably by CDK1.

The protein localises to the nucleus. It localises to the cytoplasm. The protein resides in the cytoskeleton. Its subcellular location is the microtubule organizing center. It is found in the centrosome. May play a role in maintenance of cell cycle integrity by regulating mitosis or cytokinesis. The sequence is that of M-phase-specific PLK1-interacting protein (Mplkip) from Mus musculus (Mouse).